The primary structure comprises 737 residues: MSKENMSNEGKCPFNHGAAGTNQSSGRGTSNKDWWPNQLNLNILHQHSPKSNPMGEDFDYAKEFNSLDLEAIRQDLFALMTDSQDWWPADYGHYGPFFIRMAWHSAGTYRTADGRGGATSGTQRFAPLNSWPDNVNLDKARRLLWPIKQKYGRKISWADLMILAGNCALESMGFKTFGFAGGRVDVWQPEEDIYWGTEKTWLDDERYTGDRELENPLAAVQMGLIYVNPEGPEGKPDTLASARDIRDTFGRMAMNDEETVALIAGGHTFGKAHGAGDAAQVGADPEAAGIAEQGFGWSNSMGTGKGVDTISSGLEGAWTKSPIAWDNGYFENLFEYDWELTKSPAGAWQWTPKDGAAANSVPDAHDSSKRHAPIMFTSDLALRDDPIYAPISKRFYENPDQLADAFARAWFKLTHRDMGPVARYLGPLVPQEELVWQDPIPAVTYVTVNDQDILDLKAKIQASGLTVAQLVSTAWASASTYRGSDMRGGANGARIRLAPQKDWAVNQPEQLAKVLSVLESIQAEFNRQDSTKQVSLADLIVLGGSVGVEQAAKASGHSVTVPFTAGRADASQEQTDVESFAFLEPAADGFRNYLKGKYTVSAEEMLVDRAQLLTLSAPEMTALLGGLRVLNANVGQSQHGVFTDKPETLSNDFFVNLLDMGTKWFATSEEEEEFQGRDRTTGKIKWTATRADLVFGSNSQLRAIAEVYACSDSQERFVKDFIAAWTKVMELDRFDLA.

The disordered stretch occupies residues 1–32; that stretch reads MSKENMSNEGKCPFNHGAAGTNQSSGRGTSNK. A compositionally biased stretch (polar residues) spans 20–32; it reads GTNQSSGRGTSNK. Positions 103–226 form a cross-link, tryptophyl-tyrosyl-methioninium (Trp-Tyr) (with M-252); the sequence is WHSAGTYRTA…LAAVQMGLIY (124 aa). The Proton acceptor role is filled by His104. The tryptophyl-tyrosyl-methioninium (Tyr-Met) (with W-103) cross-link spans 226–252; sequence YVNPEGPEGKPDTLASARDIRDTFGRM. Residue His267 participates in heme b binding.

The protein belongs to the peroxidase family. Peroxidase/catalase subfamily. Homodimer or homotetramer. Heme b serves as cofactor. In terms of processing, formation of the three residue Trp-Tyr-Met cross-link is important for the catalase, but not the peroxidase activity of the enzyme.

It carries out the reaction H2O2 + AH2 = A + 2 H2O. It catalyses the reaction 2 H2O2 = O2 + 2 H2O. Bifunctional enzyme with both catalase and broad-spectrum peroxidase activity. This is Catalase-peroxidase from Marinomonas sp. (strain MWYL1).